Here is a 598-residue protein sequence, read N- to C-terminus: MGVLGSRVAWAWLVQLLLLQQLAGASHVVYDDLELQAAAATADGVPPSIVDSELRTGYHFQPPKNWINDPNAPMYYKGWYHLFYQYNPKGAVWGNIVWAHSVSRDLINWVALKPAIEPSIRADKYGCWSGSATMMADGTPVIMYTGVNRPDVNYQVQNVALPRNGSDPLLREWVKPGHNPVIVPEGGINATQFRDPTTAWRGADGHWRLLVGSLAGQSRGVAYVYRSRDFRRWTRAAQPLHSAPTGMWECPDFYPVTADGRREGVDTSSAVVDAAASARVKYVLKNSLDLRRYDYYTVGTYDRKAERYVPDDPAGDEHHIRYDYGNFYASKTFYDPAKRRRILWGWANESDTAADDVAKGWAGIQAIPRKVWLDPSGKQLLQWPIEEVERLRGKWPVILKDRVVKPGEHVEVTGLQTAQADVEVSFEVGSLEAAERLDPAMAYDAQRLCSARGADARGGVGPFGLWVLASAGLEEKTAVFFRVFRPAARGGGAGKPVVLMCTDPTKSSRNPNMYQPTFAGFVDTDITNGKISLRSLIDRSVVESFGAGGKACILSRVYPSLAIGKNARLYVFNNGKAEIKVSQLTAWEMKKPVMMNGA.

The N-terminal stretch at 1–25 (MGVLGSRVAWAWLVQLLLLQQLAGA) is a signal peptide. Asp69 is an active-site residue. Asn164, Asn189, and Asn348 each carry an N-linked (GlcNAc...) asparagine glycan.

It belongs to the glycosyl hydrolase 32 family.

It is found in the secreted. It localises to the extracellular space. The protein localises to the apoplast. The protein resides in the cell wall. The enzyme catalyses Hydrolysis of terminal non-reducing beta-D-fructofuranoside residues in beta-D-fructofuranosides.. Its function is as follows. May play a role in sucrose partitioning during seed development. The polypeptide is Beta-fructofuranosidase, insoluble isoenzyme 2 (CIN2) (Oryza sativa subsp. indica (Rice)).